The sequence spans 86 residues: Parvalbumin beta 3 (86 aa).

N-acetylalanine is present on A1. The 36-residue stretch at 35–70 (LSPEEVKKFFAIIDQDHSGFIEEEELKLFLQTFSAG) folds into the EF-hand domain. Residues D48, D50, S52, F54, E56, and E59 each coordinate Ca(2+).

Belongs to the parvalbumin family.

Its function is as follows. In muscle, parvalbumin is thought to be involved in relaxation after contraction. It binds two calcium ions. The protein is Parvalbumin beta 3 of Merluccius hubbsi (Argentine hake).